Consider the following 535-residue polypeptide: Cytochrome P450 71C3 (535 aa).

The chain crosses the membrane as a helical span at residues 23–43 (QTLTLLLIAVPTVLLLLASLA). Position 475 (cysteine 475) interacts with heme.

The protein belongs to the cytochrome P450 family. The cofactor is heme.

It is found in the membrane. It functions in the pathway secondary metabolite biosynthesis; 2,4-dihydroxy-1,4-benzoxazin-3-one biosynthesis; 2,4-dihydroxy-1,4-benzoxazin-3-one from indoleglycerol phosphate: step 5/5. Its function is as follows. Catalyzes the conversion of 2-hydroxy-1,4-benzoxazin-3-one (HBOA) to 2,4-dihydroxy-1,4-benzoxazin-3-one (DIBOA). This is Cytochrome P450 71C3 (CYP71C3) from Zea mays (Maize).